The sequence spans 70 residues: DNA-directed RNA polymerase subunit omega (70 aa).

It belongs to the RNA polymerase subunit omega family. The RNAP catalytic core consists of 2 alpha, 1 beta, 1 beta' and 1 omega subunit. When a sigma factor is associated with the core the holoenzyme is formed, which can initiate transcription.

The enzyme catalyses RNA(n) + a ribonucleoside 5'-triphosphate = RNA(n+1) + diphosphate. Promotes RNA polymerase assembly. Latches the N- and C-terminal regions of the beta' subunit thereby facilitating its interaction with the beta and alpha subunits. The sequence is that of DNA-directed RNA polymerase subunit omega from Bacillus cytotoxicus (strain DSM 22905 / CIP 110041 / 391-98 / NVH 391-98).